The chain runs to 38 residues: Glutathione S-transferase 2 (38 aa).

Belongs to the GST superfamily. Phi family.

It carries out the reaction RX + glutathione = an S-substituted glutathione + a halide anion + H(+). In terms of biological role, conjugation of reduced glutathione to a wide number of exogenous and endogenous hydrophobic electrophiles. In plants, may have a detoxification role against certain herbicides. The polypeptide is Glutathione S-transferase 2 (Populus euphratica (Euphrates poplar)).